The chain runs to 429 residues: UDP-N-acetylglucosamine 1-carboxyvinyltransferase (429 aa).

22–23 lines the phosphoenolpyruvate pocket; it reads KN. Residue Arg102 participates in UDP-N-acetyl-alpha-D-glucosamine binding. Catalysis depends on Cys126, which acts as the Proton donor. The residue at position 126 (Cys126) is a 2-(S-cysteinyl)pyruvic acid O-phosphothioketal. UDP-N-acetyl-alpha-D-glucosamine-binding positions include 131–135, Asp316, and Ile338; that span reads RPVDL.

The protein belongs to the EPSP synthase family. MurA subfamily.

It localises to the cytoplasm. The enzyme catalyses phosphoenolpyruvate + UDP-N-acetyl-alpha-D-glucosamine = UDP-N-acetyl-3-O-(1-carboxyvinyl)-alpha-D-glucosamine + phosphate. It functions in the pathway cell wall biogenesis; peptidoglycan biosynthesis. Its function is as follows. Cell wall formation. Adds enolpyruvyl to UDP-N-acetylglucosamine. This Nitrobacter winogradskyi (strain ATCC 25391 / DSM 10237 / CIP 104748 / NCIMB 11846 / Nb-255) protein is UDP-N-acetylglucosamine 1-carboxyvinyltransferase.